A 108-amino-acid chain; its full sequence is MAKVTSEPQKPNEDVDEQTPSTSSTKGRKKGKTPRQRRSRSGVKGLKTTRKAKRPLRGSSSQKAGETNTPAGKPKKARGPILRGRYHRLKEKMKKEEADKEQSETSVL.

The interval 1–108 is disordered; sequence MAKVTSEPQK…DKEQSETSVL (108 aa). Residues 26–56 are compositionally biased toward basic residues; that stretch reads KGRKKGKTPRQRRSRSGVKGLKTTRKAKRPL. Residues 58 to 70 are compositionally biased toward polar residues; that stretch reads GSSSQKAGETNTP. The segment covering 73–92 has biased composition (basic residues); it reads KPKKARGPILRGRYHRLKEK. Residues 93 to 108 show a composition bias toward basic and acidic residues; that stretch reads MKKEEADKEQSETSVL.

This is an uncharacterized protein from Homo sapiens (Human).